The sequence spans 316 residues: Transaldolase A (316 aa).

Lys131 acts as the Schiff-base intermediate with substrate in catalysis.

Belongs to the transaldolase family. Type 1 subfamily. As to quaternary structure, homodimer.

Its subcellular location is the cytoplasm. It carries out the reaction D-sedoheptulose 7-phosphate + D-glyceraldehyde 3-phosphate = D-erythrose 4-phosphate + beta-D-fructose 6-phosphate. Its pathway is carbohydrate degradation; pentose phosphate pathway; D-glyceraldehyde 3-phosphate and beta-D-fructose 6-phosphate from D-ribose 5-phosphate and D-xylulose 5-phosphate (non-oxidative stage): step 2/3. Transaldolase is important for the balance of metabolites in the pentose-phosphate pathway. In Shigella flexneri, this protein is Transaldolase A.